We begin with the raw amino-acid sequence, 366 residues long: DNA-directed RNA polymerase II subunit GRINL1A (366 aa).

The segment at 1–23 is disordered; that stretch reads MFSLPRGFEPPAPEDLGRQSSAE. The stretch at 15-39 forms a coiled coil; it reads DLGRQSSAELRERLRRQERLLRNEK. Positions 29 to 68 are important for transcription repressor activity; sequence RRQERLLRNEKFICKLPDKGKKISDTVAKLKAAISEREEV. Disordered regions lie at residues 88 to 140, 158 to 182, 201 to 225, and 237 to 280; these read ATTR…HRGN, IRARAPSSEVKEHLPQHSVSSQEEE, ADQSEPSEENTSTENFPELQSETPK, and ARNP…RRAR. The segment covering 90–100 has biased composition (basic and acidic residues); that stretch reads TRADTDVDKAQ. Over residues 101-127 the composition is skewed to low complexity; the sequence is SSDLMLDTSSLDPDCSSIDIKSSKSTS. The segment at 225–296 is interaction with Pol II; that stretch reads KKPHYMKVLE…TAARLLPLHH (72 aa). A compositionally biased stretch (polar residues) spans 251–272; that stretch reads VLPTQQSDSPSHCQRGQSPASS. A Phosphoserine modification is found at S268. The important for transcription repressor activity stretch occupies residues 297-312; it reads LPAQLLSIEESLALQR. Residues 299 to 333 are a coiled coil; it reads AQLLSIEESLALQREQKQNYEEMQAKLAAQKLAER. Residues 313–338 are interaction with Pol II; that stretch reads EQKQNYEEMQAKLAAQKLAERLNIKM. The tract at residues 338-366 is disordered; that stretch reads MQSYNPEGESSGRYREVRDEADAQSSDEC. Positions 347–358 are enriched in basic and acidic residues; sequence SSGRYREVRDEA.

This sequence belongs to the GRINL1 family. Component of the Pol II(G) complex, which contains the RNA polymerase II (Pol II) core complex subunits and POLR2M isoform 1. Pol II(G) appears to be an abundant form of Pol II. In terms of processing, dephosphorylated at Ser-268 by the PNUTS-PP1 complex, promoting RNA polymerase II transcription pause-release.

It is found in the nucleus. In terms of biological role, appears to be a stable component of the Pol II(G) complex form of RNA polymerase II (Pol II). Pol II synthesizes mRNA precursors and many functional non-coding RNAs and is the central component of the basal RNA polymerase II transcription machinery. May play a role in the Mediator complex-dependent regulation of transcription activation. Acts as a negative regulator of transcriptional activation; this repression is relieved by the Mediator complex, which restores Pol II(G) activator-dependent transcription to a level equivalent to that of Pol II. The polypeptide is DNA-directed RNA polymerase II subunit GRINL1A (Polr2m) (Mus musculus (Mouse)).